The chain runs to 46 residues: uncharacterized protein (46 aa).

A helical transmembrane segment spans residues 20 to 42 (MAMIWVVAALVIALVVGTALNYI).

The protein localises to the membrane. This is an uncharacterized protein from Bacillus subtilis (strain 168).